A 64-amino-acid polypeptide reads, in one-letter code: Prokaryotic ubiquitin-like protein Pup (64 aa).

Over residues 1–11 (MAQEQTKRGGG) the composition is skewed to basic and acidic residues. The tract at residues 1–36 (MAQEQTKRGGGGDDDDVTDLGGPAGQERREKLAEDT) is disordered. The tract at residues 21-58 (GGPAGQERREKLAEDTDDLLDEIDDVLEENAEDFVRAY) is ARC ATPase binding. Positions 24–52 (AGQERREKLAEDTDDLLDEIDDVLEENAE) form a coiled coil. At Q64 the chain carries Deamidated glutamine. Q64 is covalently cross-linked (Isoglutamyl lysine isopeptide (Gln-Lys) (interchain with K-? in acceptor proteins)).

This sequence belongs to the prokaryotic ubiquitin-like protein family. Strongly interacts with the proteasome-associated ATPase ARC through a hydrophobic interface; the interacting region of Pup lies in its C-terminal half. There is one Pup binding site per ARC hexamer ring. In terms of processing, is modified by deamidation of its C-terminal glutamine to glutamate by the deamidase Dop, a prerequisite to the subsequent pupylation process.

It functions in the pathway protein degradation; proteasomal Pup-dependent pathway. In terms of biological role, protein modifier that is covalently attached to lysine residues of substrate proteins, thereby targeting them for proteasomal degradation. The tagging system is termed pupylation. The polypeptide is Prokaryotic ubiquitin-like protein Pup (Mycobacteroides abscessus (strain ATCC 19977 / DSM 44196 / CCUG 20993 / CIP 104536 / JCM 13569 / NCTC 13031 / TMC 1543 / L948) (Mycobacterium abscessus)).